We begin with the raw amino-acid sequence, 345 residues long: tRNA N6-adenosine threonylcarbamoyltransferase (345 aa).

Residues His111 and His115 each coordinate Fe cation. Residues 134-138, Asp167, Gly180, and Asn276 each bind substrate; that span reads LVSGG. Residue Asp304 coordinates Fe cation.

Belongs to the KAE1 / TsaD family. Requires Fe(2+) as cofactor.

The protein localises to the cytoplasm. It carries out the reaction L-threonylcarbamoyladenylate + adenosine(37) in tRNA = N(6)-L-threonylcarbamoyladenosine(37) in tRNA + AMP + H(+). Functionally, required for the formation of a threonylcarbamoyl group on adenosine at position 37 (t(6)A37) in tRNAs that read codons beginning with adenine. Is involved in the transfer of the threonylcarbamoyl moiety of threonylcarbamoyl-AMP (TC-AMP) to the N6 group of A37, together with TsaE and TsaB. TsaD likely plays a direct catalytic role in this reaction. The polypeptide is tRNA N6-adenosine threonylcarbamoyltransferase (Alcanivorax borkumensis (strain ATCC 700651 / DSM 11573 / NCIMB 13689 / SK2)).